We begin with the raw amino-acid sequence, 86 residues long: Small ribosomal subunit protein bS16 (86 aa).

Belongs to the bacterial ribosomal protein bS16 family.

This is Small ribosomal subunit protein bS16 from Borreliella burgdorferi (strain ATCC 35210 / DSM 4680 / CIP 102532 / B31) (Borrelia burgdorferi).